Reading from the N-terminus, the 365-residue chain is Peptide chain release factor 2 (365 aa).

Residue Gln-251 is modified to N5-methylglutamine.

The protein belongs to the prokaryotic/mitochondrial release factor family. Post-translationally, methylated by PrmC. Methylation increases the termination efficiency of RF2.

The protein localises to the cytoplasm. In terms of biological role, peptide chain release factor 2 directs the termination of translation in response to the peptide chain termination codons UGA and UAA. This is Peptide chain release factor 2 from Sulfurimonas denitrificans (strain ATCC 33889 / DSM 1251) (Thiomicrospira denitrificans (strain ATCC 33889 / DSM 1251)).